We begin with the raw amino-acid sequence, 286 residues long: 4-hydroxy-3-methylbut-2-enyl diphosphate reductase (286 aa).

Residue cysteine 12 coordinates [4Fe-4S] cluster. (2E)-4-hydroxy-3-methylbut-2-enyl diphosphate-binding residues include histidine 47 and histidine 80. Positions 47 and 80 each coordinate dimethylallyl diphosphate. The isopentenyl diphosphate site is built by histidine 47 and histidine 80. Residue cysteine 102 coordinates [4Fe-4S] cluster. Histidine 130 contacts (2E)-4-hydroxy-3-methylbut-2-enyl diphosphate. A dimethylallyl diphosphate-binding site is contributed by histidine 130. Histidine 130 provides a ligand contact to isopentenyl diphosphate. Glutamate 132 functions as the Proton donor in the catalytic mechanism. A (2E)-4-hydroxy-3-methylbut-2-enyl diphosphate-binding site is contributed by threonine 170. Residue cysteine 198 coordinates [4Fe-4S] cluster. (2E)-4-hydroxy-3-methylbut-2-enyl diphosphate-binding residues include serine 226, asparagine 228, and serine 270. Dimethylallyl diphosphate contacts are provided by serine 226, asparagine 228, and serine 270. 3 residues coordinate isopentenyl diphosphate: serine 226, asparagine 228, and serine 270.

Belongs to the IspH family. It depends on [4Fe-4S] cluster as a cofactor.

The enzyme catalyses isopentenyl diphosphate + 2 oxidized [2Fe-2S]-[ferredoxin] + H2O = (2E)-4-hydroxy-3-methylbut-2-enyl diphosphate + 2 reduced [2Fe-2S]-[ferredoxin] + 2 H(+). It catalyses the reaction dimethylallyl diphosphate + 2 oxidized [2Fe-2S]-[ferredoxin] + H2O = (2E)-4-hydroxy-3-methylbut-2-enyl diphosphate + 2 reduced [2Fe-2S]-[ferredoxin] + 2 H(+). Its pathway is isoprenoid biosynthesis; dimethylallyl diphosphate biosynthesis; dimethylallyl diphosphate from (2E)-4-hydroxy-3-methylbutenyl diphosphate: step 1/1. It participates in isoprenoid biosynthesis; isopentenyl diphosphate biosynthesis via DXP pathway; isopentenyl diphosphate from 1-deoxy-D-xylulose 5-phosphate: step 6/6. In terms of biological role, catalyzes the conversion of 1-hydroxy-2-methyl-2-(E)-butenyl 4-diphosphate (HMBPP) into a mixture of isopentenyl diphosphate (IPP) and dimethylallyl diphosphate (DMAPP). Acts in the terminal step of the DOXP/MEP pathway for isoprenoid precursor biosynthesis. This Desulfovibrio desulfuricans (strain ATCC 27774 / DSM 6949 / MB) protein is 4-hydroxy-3-methylbut-2-enyl diphosphate reductase.